A 526-amino-acid chain; its full sequence is MNFANFPWLSTIILFPIIAALFLPLIPDKDGKTVRWYALTIGLIDFVIIVTAFYTGYDFGNPNLQLVESYTWVEAIDLRWSVGADGLSMPLILLTGFITTLAILAAWPVSFKPKLFYFLMLLMYGGQIAVFAVQDMLLFFFTWELELVPVYLILSIWGGKKRLYAATKFILYTAGGSLFILIAALTMAFYGDTVTFDMTAIAQKDFGINLQLLLYGGLLIAYGVKLPIFPLHTWLPDAHGEATAPAHMLLAGILLKMGGYALLRMNAGMLPDAHALFGPVLVILGVVNIVYAALTSFAQRNLKRKIAYSSISHMGFVLIGMASFTDLGTSGAMLQMISHGLIGASLFFMVGATYDRTHTLMLDEMGGVGKKMKKIFAMWTTCSMASLALPGMSGFVAELMVFVGFATSDAYSPTFRVIIVFLAAVGVILTPIYLLSMLREILYGPENKELVAHEKLIDAEPREVFVIACLLIPIIGIGLYPKAVTQIYASTTENLTAILRQSVPSLQQTAQAPSLDVAVLRAPEIR.

14 helical membrane passes run 6-26 (FPWL…LPLI), 36-56 (WYAL…FYTG), 91-111 (LILL…PVSF), 113-133 (PKLF…VFAV), 137-157 (LLFF…LSIW), 169-189 (FILY…TMAF), 212-232 (LLLY…FPLH), 243-263 (TAPA…YALL), 275-295 (ALFG…AALT), 306-326 (IAYS…SFTD), 332-352 (AMLQ…MVGA), 375-397 (IFAM…GFVA), 417-437 (VIIV…LLSM), and 464-484 (VFVI…PKAV).

This sequence belongs to the complex I subunit 4 family.

It is found in the cellular thylakoid membrane. It catalyses the reaction a plastoquinone + NADH + (n+1) H(+)(in) = a plastoquinol + NAD(+) + n H(+)(out). The enzyme catalyses a plastoquinone + NADPH + (n+1) H(+)(in) = a plastoquinol + NADP(+) + n H(+)(out). Its function is as follows. NDH-1 shuttles electrons from NAD(P)H, via FMN and iron-sulfur (Fe-S) centers, to quinones in the respiratory chain. The immediate electron acceptor for the enzyme in this species is believed to be plastoquinone. Couples the redox reaction to proton translocation (for every two electrons transferred, four hydrogen ions are translocated across the cytoplasmic membrane), and thus conserves the redox energy in a proton gradient. In Picosynechococcus sp. (strain ATCC 27264 / PCC 7002 / PR-6) (Agmenellum quadruplicatum), this protein is NAD(P)H-quinone oxidoreductase chain 4 2.